A 360-amino-acid polypeptide reads, in one-letter code: Peptide chain release factor 1 (360 aa).

Residue Gln-235 is modified to N5-methylglutamine. The segment covering 284 to 295 has biased composition (basic and acidic residues); that stretch reads ERQEQAQADTRR. A disordered region spans residues 284–309; the sequence is ERQEQAQADTRRNLLGSGDRSDKIRT.

Belongs to the prokaryotic/mitochondrial release factor family. In terms of processing, methylated by PrmC. Methylation increases the termination efficiency of RF1.

It localises to the cytoplasm. Its function is as follows. Peptide chain release factor 1 directs the termination of translation in response to the peptide chain termination codons UAG and UAA. The sequence is that of Peptide chain release factor 1 (prfA) from Pasteurella multocida (strain Pm70).